The sequence spans 462 residues: Argininosuccinate lyase (462 aa).

Belongs to the lyase 1 family. Argininosuccinate lyase subfamily.

It localises to the cytoplasm. The enzyme catalyses 2-(N(omega)-L-arginino)succinate = fumarate + L-arginine. It functions in the pathway amino-acid biosynthesis; L-arginine biosynthesis; L-arginine from L-ornithine and carbamoyl phosphate: step 3/3. This chain is Argininosuccinate lyase, found in Bacillus cereus (strain ZK / E33L).